The sequence spans 1499 residues: MAMQPSYPAPFGAAAISSSAGQEVASTIRRQFTDADADRIVETPLGEKADSSDTAGPDSEDGIDQEGHDKITALARSLSQISQKSAGPTNTFLDPSSDPELDPNSDKFSSRKWMKNLLHIKTRDPDRYPRRTAGVSFRNLNAYGYGTAADYQADVANMWLKGFGWLRSILGCRNRVQIDILRNFEGFVRSGEMLVVLGRPGSGCSTFLKTIAGETHGLWLDEGTHIQYEGISWDEMHSRFRGEVIYQAETEIHFPQLTAGETLLFAAQARTPANRFPGVSREQYATHMRDVVMTMLGLSHTVNTRIGNEYIRGVSGGERKRVSIAETILCGCPLQCWDNSTRGLDSSTALEFVKNLRLSTDYTGSTAIVAIYQASQAIYDIFDKVIVLYEGRQIYFGKASDAKRFFIDMGFDCPDRQTTGDFLTSLTSPSERLVRKGYEALVPRTPDEFAARWRESAERQRLLADIEAFENESPLGGSKYKEFTVSRAAEKAKGTRAPSPYTLSYPMQIRLCLRRGFLRLKGDMSMTLATVIGNSIMAFIVSSVFYNLDQTTNSFFSRGALLFFAILLNAFASSLEILTLWQQRPIVEKHDKYALYHPSAEAISSMIVDLPSKFLVSVVFNLILYFMTNLRRTPGHFFVFYLFSVTITLTMSNIFRWIGAISRSMAQAMVPSSIFMMILVIYTGFTIPVRDMHPWFKWLNYLNPIGYAFESLMINEFSDRRFPCAQYVPAGPGYEDVPLSSKICSQKGAVAGQDYVDGDAFINTSYRYFSSHLWRNYGIILGFFFFFLAAYIICSELVRAKPSKGEILVFPRGKIPAFVKKSRRDGDLEGAPTFEKQQLDNAGHDSTAAIVKQTSIFHWQDVCYDIKVKGETRRILDHIDGWVKPGTLTALMGVTGAGKTSLLDVLANRVTMGVITGEMLVDGRMRDDSFQRKTGYVQQQDLHLETSTVREALIFSATLRQPASTPHKEKLAYVEEVIKMLNMEEYAEAVVGVLGEGLNVEQRKRLTIGVELAAKPALLCFFDEPTSGLDSQTAWSICTLMRKLADHGQAILCTIHQPSAILMQQFDRLLFLAKGGKTVYFGELGPNMETLIKYFENKGSSKCPKNANPAEWMLEVIGAAPGSHADQDWPEVWNNSPERAQVRAELARMKEELLQRPPPPRTKEYGEFAMPLWAQFLVCLQRMFQQYWRSPSYIYSKAATSIIPPLFIGFTFWREPTSLQGLQNQMFAIFMLLVIFPNLVQQMMPYFVTQRALYEVRERPSKAYSWKAFMLASILVELPWNILMAVPAYFCWYYPIGLYRNAYPTDSVTERGGTMFLLILIFMMFTSTFSSMIIAGIEQPETGGNIAQLLFSLCLIFNGVLASPSALPGFWIFMYRVSPFTYLVSAVLSVGLAGTSVKCSDIEILHVPPPQGQNCSSFLDAYVQMSHGRLLNPEATSDCQVCPVADTDTFLAQVSISYSDRWRNVGLLFVYIVFNIFAAIFLYWLIRVPKKRSRKIKEE.

Disordered stretches follow at residues 1 to 66 and 80 to 107; these read MAMQ…IDQE and QISQ…NSDK. A compositionally biased stretch (polar residues) spans 16–30; that stretch reads ISSSAGQEVASTIRR. Basic and acidic residues predominate over residues 31–51; sequence QFTDADADRIVETPLGEKADS. A compositionally biased stretch (polar residues) spans 80–94; it reads QISQKSAGPTNTFLD. Residues 166–415 enclose the ABC transporter 1 domain; it reads LRSILGCRNR…FIDMGFDCPD (250 aa). N-linked (GlcNAc...) asparagine glycosylation is present at Asn339. 5 consecutive transmembrane segments (helical) span residues 526–546, 561–581, 606–626, 635–655, and 669–689; these read MTLA…SVFY, LLFF…LTLW, MIVD…ILYF, GHFF…SNIF, and MVPS…TIPV. N-linked (GlcNAc...) asparagine glycosylation is present at Asn763. The helical transmembrane segment at 778 to 798 threads the bilayer; sequence GIILGFFFFFLAAYIICSELV. One can recognise an ABC transporter 2 domain in the interval 857 to 1100; that stretch reads FHWQDVCYDI…LIKYFENKGS (244 aa). Position 893-900 (893-900) interacts with ATP; sequence GVTGAGKT. The next 5 membrane-spanning stretches (helical) occupy residues 1193–1213, 1227–1247, 1268–1288, 1317–1337, and 1353–1373; these read YIYS…FTFW, FAIF…MPYF, AFML…AVPA, LLIL…IAGI, and LCLI…FWIF. Residue Asn1414 is glycosylated (N-linked (GlcNAc...) asparagine). A helical transmembrane segment spans residues 1466 to 1486; sequence GLLFVYIVFNIFAAIFLYWLI.

This sequence belongs to the ABC transporter superfamily. ABCG family. PDR (TC 3.A.1.205) subfamily.

It localises to the cell membrane. The catalysed reaction is itraconazole(in) + ATP + H2O = itraconazole(out) + ADP + phosphate + H(+). It carries out the reaction voriconazole(in) + ATP + H2O = voriconazole(out) + ADP + phosphate + H(+). Its activity is regulated as follows. The efflux inhibitor FK506 impairs the transport activity. Functionally, pleiotropic ABC efflux transporter that confers resistance to structurally and functionally unrelated compounds including azoles such as itraconazole, posaconazole, and voriconazole. This chain is ABC multidrug transporter A-2, found in Aspergillus fumigatus (strain ATCC MYA-4609 / CBS 101355 / FGSC A1100 / Af293) (Neosartorya fumigata).